Consider the following 371-residue polypeptide: Peptide chain release factor 2 (371 aa).

At Gln-253 the chain carries N5-methylglutamine.

The protein belongs to the prokaryotic/mitochondrial release factor family. Post-translationally, methylated by PrmC. Methylation increases the termination efficiency of RF2.

The protein resides in the cytoplasm. Functionally, peptide chain release factor 2 directs the termination of translation in response to the peptide chain termination codons UGA and UAA. This Mycobacterium marinum (strain ATCC BAA-535 / M) protein is Peptide chain release factor 2.